Here is a 682-residue protein sequence, read N- to C-terminus: Methionine--tRNA ligase (682 aa).

The 'HIGH' region motif lies at 15–25 (PYANGAIHLGH). Residues C146, C149, C159, and C162 each coordinate Zn(2+). The 'KMSKS' region signature appears at 331 to 335 (KMSKS). K334 provides a ligand contact to ATP. The 103-residue stretch at 580–682 (DFAKLDMRVA…SGVTAGMQVK (103 aa)) folds into the tRNA-binding domain.

The protein belongs to the class-I aminoacyl-tRNA synthetase family. MetG type 1 subfamily. As to quaternary structure, homodimer. Requires Zn(2+) as cofactor.

It localises to the cytoplasm. The catalysed reaction is tRNA(Met) + L-methionine + ATP = L-methionyl-tRNA(Met) + AMP + diphosphate. Functionally, is required not only for elongation of protein synthesis but also for the initiation of all mRNA translation through initiator tRNA(fMet) aminoacylation. This is Methionine--tRNA ligase from Haemophilus influenzae (strain PittEE).